Consider the following 188-residue polypeptide: Methylated-DNA--protein-cysteine methyltransferase (188 aa).

DNA contacts are provided by Y120, G121, and R134. C151 serves as the catalytic Nucleophile; methyl group acceptor. S157 is a DNA binding site.

It belongs to the MGMT family.

The protein localises to the nucleus. The enzyme catalyses a 6-O-methyl-2'-deoxyguanosine in DNA + L-cysteinyl-[protein] = S-methyl-L-cysteinyl-[protein] + a 2'-deoxyguanosine in DNA. It carries out the reaction a 4-O-methyl-thymidine in DNA + L-cysteinyl-[protein] = a thymidine in DNA + S-methyl-L-cysteinyl-[protein]. Its function is as follows. Involved in the cellular defense against the biological effects of O6-methylguanine (O6-MeG) and O4-methylthymine (O4-MeT) in DNA. Repairs the methylated nucleobase in DNA by stoichiometrically transferring the methyl group to a cysteine residue in the enzyme. This is a suicide reaction: the enzyme is irreversibly inactivated. Prefers double-stranded DNA over single-stranded DNA as substrate. This Saccharomyces cerevisiae (strain ATCC 204508 / S288c) (Baker's yeast) protein is Methylated-DNA--protein-cysteine methyltransferase (MGT1).